The following is a 227-amino-acid chain: Cytidylate kinase (227 aa).

12-20 (GPSGAGKGT) is a binding site for ATP.

The protein belongs to the cytidylate kinase family. Type 1 subfamily.

Its subcellular location is the cytoplasm. The catalysed reaction is CMP + ATP = CDP + ADP. It catalyses the reaction dCMP + ATP = dCDP + ADP. This is Cytidylate kinase from Salmonella paratyphi A (strain ATCC 9150 / SARB42).